An 808-amino-acid polypeptide reads, in one-letter code: Genome polyprotein (808 aa).

Residues 34-55 (TAEVGSHQPEPLKTSVDKPGSK) form a disordered region. 2 short sequence motifs ((L)YPX(n)L motif) span residues 146-150 (YPHGL) and 179-184 (YPVWEL).

It belongs to the picornaviridae polyprotein family. Homopentamer. Homooligomer. In terms of assembly, interacts with capsid protein VP2. Interacts with capsid protein VP3. As to quaternary structure, interacts with capsid protein VP1. Interacts with capsid protein VP3. Interacts with capsid protein VP1. Interacts with capsid protein VP2. In terms of processing, specific enzymatic cleavages by viral protease in vivo yield a variety of precursors and mature proteins. Polyprotein processing intermediates are produced, such as P1-2A which is a functional precursor of the structural proteins, VP0 which is a VP4-VP2 precursor, VP1-2A precursor, 3ABC precursor which is a stable and catalytically active precursor of 3A, 3B and 3C proteins, 3AB and 3CD precursors. The assembly signal 2A is removed from VP1-2A by a host protease, possibly host Cathepsin L. This cleavage occurs over a region of 3 amino-acids probably generating VP1 proteins with heterogeneous C-termini. Post-translationally, during virion maturation, immature virions are rendered infectious following cleavage of VP0 into VP4 and VP2. This maturation seems to be an autocatalytic event triggered by the presence of RNA in the capsid and is followed by a conformational change of the particle. The assembly signal 2A is removed from VP1-2A by a host protease, possibly host Cathepsin L in naked virions. This cleavage does not occur in enveloped virions. This cleavage occurs over a region of 3 amino-acids probably generating VP1 proteins with heterogeneous C-termini. In terms of processing, unlike other picornaviruses, does not seem to be myristoylated.

The protein resides in the virion. The protein localises to the host endosome. It localises to the host multivesicular body. Functionally, capsid proteins VP1, VP2, and VP3 form a closed capsid enclosing the viral positive strand RNA genome. All these proteins contain a beta-sheet structure called beta-barrel jelly roll. Together they form an icosahedral capsid (T=3) composed of 60 copies of each VP1, VP2, and VP3, with a diameter of approximately 300 Angstroms. VP1 is situated at the 12 fivefold axes, whereas VP2 and VP3 are located at the quasi-sixfold axes. The naked capsid interacts with the host receptor HAVCR1 to provide virion attachment to and probably entry into the target cell. In terms of biological role, VP0 precursor is a component of the immature procapsids. Its function is as follows. Plays a role in the assembly of the 12 pentamers into an icosahedral structure. Has not been detected in mature virions, supposedly owing to its small size. Precursor component of immature procapsids that corresponds to an extended form of the structural protein VP1. After maturation, possibly by the host Cathepsin L, the assembly signal 2A is cleaved to give rise to the mature VP1 protein. This is Genome polyprotein from Human hepatitis A virus genotype IIIA (isolate GA76) (HHAV).